A 443-amino-acid polypeptide reads, in one-letter code: Mimosinase, chloroplastic (443 aa).

The transit peptide at 1-43 (MALSSTFLNPLVSSVAVNPQPKITSGKGFRVNCLIRTQQTVIK) directs the protein to the chloroplast. Residues Tyr105, Arg107, Gly135, Met136, Ser254, and Thr256 each coordinate pyridoxal 5'-phosphate. At Lys257 the chain carries N6-(pyridoxal phosphate)lysine.

This sequence belongs to the trans-sulfuration enzymes family. As to quaternary structure, forms homodimers. May form homotetramers from two homodimers. Pyridoxal 5'-phosphate is required as a cofactor.

The protein resides in the plastid. It localises to the chloroplast. It carries out the reaction L-mimosine + H2O = 3-hydroxy-4H-pyrid-4-one + pyruvate + NH4(+). In terms of biological role, catalyzes the degradation of mimosine, which is a toxic secondary metabolite found in all Leucaena and Mimosa species. In Leucaena leucocephala (White popinac), this protein is Mimosinase, chloroplastic.